The primary structure comprises 113 residues: Ig kappa chain V-II region 26-10 (113 aa).

Residues 1–23 are framework-1; that stretch reads DVVMTQTPLSLPVSLGDQASISC. The cysteines at positions 23 and 93 are disulfide-linked. The tract at residues 24–39 is complementarity-determining-1; sequence RSSQSLVHSNGNTYLN. Residues 40 to 54 are framework-2; the sequence is WYLQKAGQSPKLLIY. The segment at 55–61 is complementarity-determining-2; that stretch reads KVSNRFS. The framework-3 stretch occupies residues 62–93; that stretch reads GVPDRFSGSGSGTDFTLKISRVEAEDLGIYFC. Positions 94–102 are complementarity-determining-3; it reads SQTTHVPPT. The tract at residues 103-112 is framework-4; it reads FGGGTKLEIK.

This chain is Ig kappa chain V-II region 26-10, found in Mus musculus (Mouse).